The sequence spans 159 residues: MTSEPYWKTKRLDEMNTVEWEALCDGCGLCCLNKLEDWESGEVVFTSVACRLLDGESCRCKDYPNRQATVPDCIQLTPDQVEDIAWLPPSCGYRLVHEGRDLYWWHPLVSGDPETVHQAGISARGRTVSEEHVSVEDFEDYLCDWPMTVLLQAEESGDQ.

This sequence belongs to the UPF0260 family.

The sequence is that of UPF0260 protein Avi_1324 from Allorhizobium ampelinum (strain ATCC BAA-846 / DSM 112012 / S4) (Agrobacterium vitis (strain S4)).